Consider the following 209-residue polypeptide: MEGGGGSGNKTTGGLAGFFGAGGAGYSHADLAGVPLTGMNPLSPYLNVDPRYLVQDTDEFILPTGANKTRGRFELAFFTIGGCCMTGAAFGAMNGLRLGLKETQNMAWSKPRNVQILNMVTRQGALWANTLGSLALLYSAFGVIIEKTRGAEDDLNTVAAGTMTGMLYKCTGGLRGIARGGLTGLTLTSLYALYNNWEHMKGSLLQQSL.

Transmembrane regions (helical) follow at residues 73-93 (FELAFFTIGGCCMTGAAFGAM), 125-145 (ALWANTLGSLALLYSAFGVII), and 181-197 (GLTGLTLTSLYALYNNW).

Belongs to the Tim17/Tim22/Tim23 family. As to quaternary structure, component of the TIM23 complex at least composed of TIMM23, TIMM17 (TIMM17A or TIMM17B) and TIMM50; within this complex, directly interacts with TIMM50. The complex interacts with the TIMM44 component of the PAM complex and with DNAJC15. Upon mitochondrial depolarization, interacts with PINK1; the interaction is required for PINK1 accumulation at the outer mitochondrial membrane, kinase activation by autophosphorylation and PRKN recruitement to mitochondria.

The protein resides in the mitochondrion inner membrane. In terms of biological role, essential component of the TIM23 complex, a complex that mediates the translocation of transit peptide-containing proteins across the mitochondrial inner membrane. Has a role in the activation of stress-induced mitophagy by protecting PINK1 from OMA1-mediated degradation and facilitating its accumulation at the outer mitochondrial membrane in response to depolarization. The sequence is that of Mitochondrial import inner membrane translocase subunit Tim23 (TIMM23) from Homo sapiens (Human).